We begin with the raw amino-acid sequence, 66 residues long: Large ribosomal subunit protein bL35 (66 aa).

This sequence belongs to the bacterial ribosomal protein bL35 family.

The chain is Large ribosomal subunit protein bL35 from Synechococcus sp. (strain RCC307).